A 515-amino-acid chain; its full sequence is Cytochrome P450 monooxygenase mfmA (515 aa).

Residues 3–23 (KISIIPIVGVALSLAIILQLG) traverse the membrane as a helical segment. Cys-453 is a heme binding site.

Belongs to the cytochrome P450 family. Heme is required as a cofactor.

The protein localises to the membrane. The protein operates within secondary metabolite biosynthesis; terpenoid biosynthesis. Cytochrome P450 monooxygenase; part of the gene cluster that mediates the biosynthesis of the phthalide-terpenoid hybrid 11'-O-desmethylfendlerol. Within the pathway, mfma and mfmC act together to convert 3,5-dimethylorsellinic acid (DMOA) into the phthalide 5,7-dihydroxy-4-(hydroxymethyl)-6-methylphthalide. MfmA performs especially an hydroxylation at C-9. The biosynthesis of 11'-O-desmethylfendlerol begins with the NR-PKS mfmB that forms 3,5-dimethylorsellinic acid (DMOA), which is then transformed into the phthalide 5,7-dihydroxy-4-(hydroxymethyl)-6-methylphthalide by the cytochrome P450 monooxygenase mfmA and the hydrolase mfmC. Subsequently, the methyltransferase mfmE catalyzes 7-O-methylation to yield 5-hydroxy-4-(hydroxymethyl)-7-methoxy-6-methylphthalide, which undergoes C-3 hydroxylation by the cytochrome P450 monooxygenase mfmF. The resultant cyclopolic acid (2,5-dihydroxy-4-(hydroxymethyl)-7-methoxy-6-methylphthalide) is then farnesylated by the DMATS-type prenyltransferase mfmD to afford 5-O-farnesylcyclopolic acid. Finally, the Pyr4-family terpene cyclase mfmH cyclizes the farnesyl moiety of 5-O-farnesylcyclopolic acid into a drimane-like structure, thus completing the biosynthesis of 11'-O-desmethylfendlerol. The chain is Cytochrome P450 monooxygenase mfmA from Annulohypoxylon moriforme (Filamentous fungus).